We begin with the raw amino-acid sequence, 177 residues long: Small ribosomal subunit protein uS5 (177 aa).

Residues 19 to 82 (WQERVVQIRR…ADGKKQLVEV (64 aa)) form the S5 DRBM domain.

It belongs to the universal ribosomal protein uS5 family. As to quaternary structure, part of the 30S ribosomal subunit. Contacts proteins S4 and S8.

Its function is as follows. With S4 and S12 plays an important role in translational accuracy. In terms of biological role, located at the back of the 30S subunit body where it stabilizes the conformation of the head with respect to the body. The sequence is that of Small ribosomal subunit protein uS5 from Acaryochloris marina (strain MBIC 11017).